A 92-amino-acid polypeptide reads, in one-letter code: Small ribosomal subunit protein uS19c (92 aa).

Belongs to the universal ribosomal protein uS19 family.

It localises to the plastid. The protein resides in the chloroplast. Functionally, protein S19 forms a complex with S13 that binds strongly to the 16S ribosomal RNA. The polypeptide is Small ribosomal subunit protein uS19c (Populus alba (White poplar)).